The primary structure comprises 1088 residues: RNA-directed RNA polymerase (1088 aa).

One can recognise a RdRp catalytic domain in the interval 501–687 (LSYGDVTRFL…AKRYIAGGKI (187 aa)).

Belongs to the reoviridae RNA-directed RNA polymerase family. In terms of assembly, interacts with VP3 (Potential). Interacts with VP2; this interaction activates VP1. Interacts with NSP5; this interaction is probably necessary for the formation of functional virus factories. Interacts with NSP2; this interaction is weak. The cofactor is Mg(2+).

The protein localises to the virion. The enzyme catalyses RNA(n) + a ribonucleoside 5'-triphosphate = RNA(n+1) + diphosphate. RNA-directed RNA polymerase that is involved in both transcription and genome replication. Together with VP3 capping enzyme, forms an enzyme complex positioned near the channels situated at each of the five-fold vertices of the core. Following infection, the outermost layer of the virus is lost, leaving a double-layered particle (DLP) made up of the core and VP6 shell. VP1 then catalyzes the transcription of fully conservative plus-strand genomic RNAs that are extruded through the DLP's channels into the cytoplasm where they function as mRNAs for translation of viral proteins. One copy of each of the viral (+)RNAs is also recruited during core assembly, together with newly synthesized polymerase complexes and VP2. The polymerase of these novo-formed particles catalyzes the synthesis of complementary minus-strands leading to dsRNA formation. To do so, the polymerase specifically recognizes and binds 4 bases 5'-UGUG-3' in the conserved 3'-sequence of plus-strand RNA templates. VP2 presumably activates the autoinhibited VP1-RNA complex to coordinate packaging and genome replication. Once dsRNA synthesis is complete, the polymerase switches to the transcriptional mode, thus providing secondary transcription. This is RNA-directed RNA polymerase from Rotavirus A (strain RVA/SA11-Patton/G3P[X]) (RV-A).